Consider the following 281-residue polypeptide: ATP phosphoribosyltransferase (281 aa).

This sequence belongs to the ATP phosphoribosyltransferase family. Long subfamily. Mg(2+) is required as a cofactor.

It localises to the cytoplasm. The catalysed reaction is 1-(5-phospho-beta-D-ribosyl)-ATP + diphosphate = 5-phospho-alpha-D-ribose 1-diphosphate + ATP. It participates in amino-acid biosynthesis; L-histidine biosynthesis; L-histidine from 5-phospho-alpha-D-ribose 1-diphosphate: step 1/9. Feedback inhibited by histidine. Catalyzes the condensation of ATP and 5-phosphoribose 1-diphosphate to form N'-(5'-phosphoribosyl)-ATP (PR-ATP). Has a crucial role in the pathway because the rate of histidine biosynthesis seems to be controlled primarily by regulation of HisG enzymatic activity. The sequence is that of ATP phosphoribosyltransferase from Salinispora tropica (strain ATCC BAA-916 / DSM 44818 / JCM 13857 / NBRC 105044 / CNB-440).